Consider the following 222-residue polypeptide: Translation initiation factor 6 (222 aa).

It belongs to the eIF-6 family.

Binds to the 50S ribosomal subunit and prevents its association with the 30S ribosomal subunit to form the 70S initiation complex. The chain is Translation initiation factor 6 from Methanocorpusculum labreanum (strain ATCC 43576 / DSM 4855 / Z).